Consider the following 114-residue polypeptide: Histone H2B (114 aa).

The disordered stretch occupies residues 1 to 22 (MAKTPSKKAAKAPKKAGSKRNK). N6-acetyllysine is present on Lys-3. A Glycyl lysine isopeptide (Lys-Gly) (interchain with G-Cter in ubiquitin) cross-link involves residue Lys-110.

It belongs to the histone H2B family. The nucleosome is a histone octamer containing two molecules each of H2A, H2B, H3 and H4 assembled in one H3-H4 heterotetramer and two H2A-H2B heterodimers. The octamer wraps approximately 147 bp of DNA. In terms of processing, monoubiquitination of Lys-110 gives a specific tag for epigenetic transcriptional activation and is also prerequisite for histone H3 'Lys-4' and 'Lys-79' methylation.

It localises to the nucleus. The protein resides in the chromosome. Core component of nucleosome. Nucleosomes wrap and compact DNA into chromatin, limiting DNA accessibility to the cellular machineries which require DNA as a template. Histones thereby play a central role in transcription regulation, DNA repair, DNA replication and chromosomal stability. DNA accessibility is regulated via a complex set of post-translational modifications of histones, also called histone code, and nucleosome remodeling. The chain is Histone H2B from Olisthodiscus luteus (Marine phytoflagellate).